Reading from the N-terminus, the 146-residue chain is Hemoglobin subunit beta (146 aa).

Position 1 is an N-acetylvaline (valine 1). The Globin domain occupies 2–146 (HLSGEEKAAV…VANALAHKYH (145 aa)). A Phosphothreonine modification is found at threonine 12. Serine 44 is modified (phosphoserine). Lysine 59 carries the post-translational modification N6-acetyllysine. Heme b is bound at residue histidine 63. Lysine 82 is modified (N6-acetyllysine). Heme b is bound at residue histidine 92. Position 93 is an S-nitrosocysteine (cysteine 93). Lysine 144 is subject to N6-acetyllysine.

This sequence belongs to the globin family. In terms of assembly, heterotetramer of two alpha chains and two beta chains. Red blood cells.

In terms of biological role, involved in oxygen transport from the lung to the various peripheral tissues. This Tupaia glis (Common tree shrew) protein is Hemoglobin subunit beta (HBB).